The primary structure comprises 351 residues: D-alanine--D-alanine ligase (351 aa).

Residues 146-340 form the ATP-grasp domain; sequence KEIMLYNNIK…YEDLCESIVL (195 aa). 173-226 is a binding site for ATP; it reads AFDYPMVVKPNSGGSSIGTRIVHDEAELAESLKDAYRFDDEIIVEEFITGREFS. Residues D295, E307, and N309 each coordinate Mg(2+).

Belongs to the D-alanine--D-alanine ligase family. Mg(2+) is required as a cofactor. Requires Mn(2+) as cofactor.

It localises to the cytoplasm. The enzyme catalyses 2 D-alanine + ATP = D-alanyl-D-alanine + ADP + phosphate + H(+). The protein operates within cell wall biogenesis; peptidoglycan biosynthesis. Its function is as follows. Cell wall formation. The protein is D-alanine--D-alanine ligase of Pediococcus pentosaceus (strain ATCC 25745 / CCUG 21536 / LMG 10740 / 183-1w).